We begin with the raw amino-acid sequence, 400 residues long: Elongation factor Tu 2 (400 aa).

Residues 10–209 (KPHVNIGTIG…KVDEYIPTPQ (200 aa)) enclose the tr-type G domain. The segment at 19-26 (GHVDHGKT) is G1. 19–26 (GHVDHGKT) provides a ligand contact to GTP. Threonine 26 contacts Mg(2+). Residues 60 to 64 (GITIN) form a G2 region. Residues 81-84 (DCPG) are G3. GTP-binding positions include 81 to 85 (DCPGH) and 136 to 139 (NKAD). Positions 136 to 139 (NKAD) are G4. Residues 174–176 (SAL) are G5.

Belongs to the TRAFAC class translation factor GTPase superfamily. Classic translation factor GTPase family. EF-Tu/EF-1A subfamily. Monomer.

Its subcellular location is the cytoplasm. It carries out the reaction GTP + H2O = GDP + phosphate + H(+). Its function is as follows. GTP hydrolase that promotes the GTP-dependent binding of aminoacyl-tRNA to the A-site of ribosomes during protein biosynthesis. The sequence is that of Elongation factor Tu 2 from Carboxydothermus hydrogenoformans (strain ATCC BAA-161 / DSM 6008 / Z-2901).